A 235-amino-acid polypeptide reads, in one-letter code: Large ribosomal subunit protein uL1 (235 aa).

It belongs to the universal ribosomal protein uL1 family. Part of the 50S ribosomal subunit.

Binds directly to 23S rRNA. The L1 stalk is quite mobile in the ribosome, and is involved in E site tRNA release. Functionally, protein L1 is also a translational repressor protein, it controls the translation of the L11 operon by binding to its mRNA. The protein is Large ribosomal subunit protein uL1 of Mycolicibacterium paratuberculosis (strain ATCC BAA-968 / K-10) (Mycobacterium paratuberculosis).